The chain runs to 149 residues: Deoxyuridine 5'-triphosphate nucleotidohydrolase (149 aa).

Substrate-binding positions include 68-70, asparagine 81, 85-87, and lysine 95; these read RSG and TID.

The protein belongs to the dUTPase family. It depends on Mg(2+) as a cofactor.

The catalysed reaction is dUTP + H2O = dUMP + diphosphate + H(+). Its pathway is pyrimidine metabolism; dUMP biosynthesis; dUMP from dCTP (dUTP route): step 2/2. This enzyme is involved in nucleotide metabolism: it produces dUMP, the immediate precursor of thymidine nucleotides and it decreases the intracellular concentration of dUTP so that uracil cannot be incorporated into DNA. The protein is Deoxyuridine 5'-triphosphate nucleotidohydrolase of Bdellovibrio bacteriovorus (strain ATCC 15356 / DSM 50701 / NCIMB 9529 / HD100).